The following is a 486-amino-acid chain: Dipeptide and tripeptide permease B (486 aa).

Over 1 to 27 the chain is Cytoplasmic; it reads MNKPVSIGLLQQPKPFFMIFFVELWER. The chain crosses the membrane as a helical span at residues 28-48; that stretch reads FGYYGVQGVLTVYFVQKLGFS. Over 49–52 the chain is Periplasmic; that stretch reads QEQA. Residues 53–73 form a helical membrane-spanning segment; it reads FITFGAFAALVFGLISIGGYV. Residues 74–82 are Cytoplasmic-facing; the sequence is GDHLLGTKR. A helical transmembrane segment spans residues 83–103; the sequence is TIVLGAIVLAIGYFMTGLSIL. The Periplasmic portion of the chain corresponds to 104 to 106; that stretch reads HPN. The chain crosses the membrane as a helical span at residues 107–127; that stretch reads LIFYALGTIAVGNGLFKANPA. Residues 128–146 lie on the Cytoplasmic side of the membrane; it reads SLLSKCYPPKDPRLDGAFT. A helical membrane pass occupies residues 147–167; it reads LFYMSINLGSLFSLALAPVIA. Over 168–172 the chain is Periplasmic; it reads EKFSY. The chain crosses the membrane as a helical span at residues 173 to 193; sequence AVTYNICGIGLIIALLVYIFC. Residues 194–211 lie on the Cytoplasmic side of the membrane; sequence RNTVRNIGSEPDHQRINY. A helical membrane pass occupies residues 212 to 232; the sequence is TNLFLVVAGSVVMVYVCAWLM. A topological domain (periplasmic) is located at residue His-233. The chain crosses the membrane as a helical span at residues 234-254; the sequence is NVKIANIMLITLSVIVVFIFF. Residues 255-267 are Cytoplasmic-facing; it reads REALKQDKIGRNK. Residues 268 to 288 traverse the membrane as a helical segment; sequence MFVAFILMLQAIVFFILYAQM. Residues 289–311 are Periplasmic-facing; that stretch reads PTSLNFFAIHNVHHQLLGFNINP. A helical membrane pass occupies residues 312 to 332; the sequence is VSFQALNPFWIVVASPILAVL. Over 333-348 the chain is Cytoplasmic; it reads YTHWGAKGKDLTMPAK. Residues 349–369 traverse the membrane as a helical segment; that stretch reads FAVGMFLCSLGFLTAAAAGLW. The Periplasmic segment spans residues 370 to 375; that stretch reads FADEQG. The helical transmembrane segment at 376 to 396 threads the bilayer; it reads LTSAWFIVLVYLFQGVGELMI. The Cytoplasmic portion of the chain corresponds to 397 to 419; it reads SALGLAMIAALVPQYLMGFILGM. Residues 420–440 traverse the membrane as a helical segment; sequence WYLTQATSSLLGGYVAALTAA. The Periplasmic segment spans residues 441–456; the sequence is PKGITDPLQTLPVYTS. Residues 457–477 traverse the membrane as a helical segment; it reads VFGKIGIATFIVAIIMAATVP. Topologically, residues 478–486 are cytoplasmic; it reads LLNRMMQEK.

This sequence belongs to the major facilitator superfamily. Proton-dependent oligopeptide transporter (POT/PTR) (TC 2.A.17) family. DtpB subfamily.

Its subcellular location is the cell inner membrane. Proton-dependent permease that transports di- and tripeptides. The sequence is that of Dipeptide and tripeptide permease B from Photorhabdus luminescens (Xenorhabdus luminescens).